The primary structure comprises 467 residues: Argininosuccinate lyase (467 aa).

It belongs to the lyase 1 family. Argininosuccinate lyase subfamily.

The protein localises to the cytoplasm. It catalyses the reaction 2-(N(omega)-L-arginino)succinate = fumarate + L-arginine. Its pathway is amino-acid biosynthesis; L-arginine biosynthesis; L-arginine from L-ornithine and carbamoyl phosphate: step 3/3. This Campylobacter curvus (strain 525.92) protein is Argininosuccinate lyase.